The sequence spans 323 residues: Aspartate carbamoyltransferase catalytic subunit (323 aa).

R61 and T62 together coordinate carbamoyl phosphate. K89 contacts L-aspartate. Carbamoyl phosphate is bound by residues R111, H144, and Q147. 2 residues coordinate L-aspartate: R184 and R238. Residues G279 and P280 each coordinate carbamoyl phosphate.

Belongs to the aspartate/ornithine carbamoyltransferase superfamily. ATCase family. As to quaternary structure, heterododecamer (2C3:3R2) of six catalytic PyrB chains organized as two trimers (C3), and six regulatory PyrI chains organized as three dimers (R2).

It carries out the reaction carbamoyl phosphate + L-aspartate = N-carbamoyl-L-aspartate + phosphate + H(+). Its pathway is pyrimidine metabolism; UMP biosynthesis via de novo pathway; (S)-dihydroorotate from bicarbonate: step 2/3. In terms of biological role, catalyzes the condensation of carbamoyl phosphate and aspartate to form carbamoyl aspartate and inorganic phosphate, the committed step in the de novo pyrimidine nucleotide biosynthesis pathway. The polypeptide is Aspartate carbamoyltransferase catalytic subunit (Acaryochloris marina (strain MBIC 11017)).